The primary structure comprises 346 residues: Low specificity L-threonine aldolase (346 aa).

An N6-(pyridoxal phosphate)lysine modification is found at Lys-207.

This sequence belongs to the threonine aldolase family. In terms of assembly, homotetramer. Pyridoxal 5'-phosphate is required as a cofactor.

The catalysed reaction is L-threonine = acetaldehyde + glycine. It catalyses the reaction L-allo-threonine = acetaldehyde + glycine. Catalyzes the cleavage of L-allo-threonine and L-threonine to glycine and acetaldehyde. Can also act on L-erythro-phenylserine, L-threo-phenylserine, L-beta-3,4-methylenedioxyphenylserine and L-beta-3,4-dihydroxyphenylserine. The polypeptide is Low specificity L-threonine aldolase (ltaE) (Pseudomonas sp. (strain NCIMB 10558)).